The sequence spans 575 residues: 4-substituted benzoates-glutamate ligase GH3.12 (575 aa).

Residues 6–33 (DINETFEKQLKDLTSNVKSIQDNLLEEI) are a coiled coil. Position 95-96 (95-96 (SS)) interacts with AMP. 120 to 123 (YDLR) contributes to the salicylate binding site. 6 residues coordinate AMP: Thr301, Thr324, Ser328, Tyr347, Asp398, and Arg417.

This sequence belongs to the IAA-amido conjugating enzyme family. Interacts with the P.syringae pv. maculicola effector HopW1-1 (via C-terminus). As to expression, expressed in seedlings, mostly in cotyledons, leaves, hypocotyls and sporadically in roots. Not detected in unchallenged adult plants, except in flowers.

Its activity is regulated as follows. Specifically and reversibly inhibited by salicylic acid (SA). Catalyzes the conjugation of specific amino acids (e.g. Glu and possibly His, Lys, and Met) to their preferred acyl substrates (e.g. 4-substituted benzoates), in a magnesium ion- and ATP-dependent manner. Can use 4-substituted benzoates such as 4-aminobenzoate (pABA), 4-fluorobenzoate and 4-hydroxybenzoate (4-HBA), and, to a lesser extent, benzoate, vanillate and trans-cinnamate, but not 2-substituted benzoates and salicylic acid (SA), as conjugating acyl substrates. Involved in both basal and induced resistance in a SA-dependent manner. Confers resistance to virulent and avirulent pathogens (at least bacteria and oomycetes), and promotes SA glucosides accumulation. Required for the establishment of hyper-sensitive response (HR) upon incompatible interaction and subsequent systemic acquired resistance (SAR). The polypeptide is 4-substituted benzoates-glutamate ligase GH3.12 (GH3.12) (Arabidopsis thaliana (Mouse-ear cress)).